We begin with the raw amino-acid sequence, 1081 residues long: Teashirt homolog 3 (1081 aa).

3 disordered regions span residues 25–104 (LVED…EVQV), 141–161 (PSSE…SSCG), and 238–257 (HYRD…WSKP). Over residues 26–37 (VEDDVEPEEQAA) the composition is skewed to acidic residues. A compositionally biased stretch (basic and acidic residues) spans 68 to 87 (SSHEMDSESHISETSDRMAD). C2H2-type zinc fingers lie at residues 214-238 (FRCK…ETGH) and 275-299 (LKCM…KTKH). The segment covering 238–247 (HYRDDNHETD) has biased composition (basic and acidic residues). The interval 325–346 (SLELELPSSPDSTGGTPKATLS) is disordered. The C2H2-type 3; atypical zinc finger occupies 387 to 410 (KCMECGSSHDTLQELTAHMMVTGH). Residues 474 to 491 (VDKEKAVPDEKPKEREKP) show a composition bias toward basic and acidic residues. 4 disordered regions span residues 474-499 (VDKE…EKYD), 626-699 (EKMK…KPLS), 792-824 (LTKG…TVTT), and 855-897 (TESH…RQSN). Positions 606–630 (NFHAMEELVKKVTEKVAKVEEKMKE) form a coiled coil. Residues 660–670 (SDGSFKSQENS) show a composition bias toward polar residues. At S682 the chain carries Phosphoserine. Low complexity-rich tracts occupy residues 800–824 (GCSL…TVTT) and 856–869 (ESHT…SSIS). Residues 891–961 (RKGRQSNWNP…NVKYQLRRTG (71 aa)) constitute a DNA-binding region (homeobox; atypical). 2 C2H2-type zinc fingers span residues 976 to 998 (FFCN…LESH) and 1041 to 1064 (YQCK…SKTH).

It belongs to the teashirt C2H2-type zinc-finger protein family. In terms of assembly, interacts (via N-terminus) with HDAC1 and HDAC2; the interaction is direct. Found in a trimeric complex with APBB1 and HDAC1; the interaction between HDAC1 and APBB1 is mediated by TSHZ3. Interacts (via homeobox domain) with APBB1 (via PID domain 1). As to expression, expressed in corticostriatal neurons.

The protein resides in the nucleus. It localises to the cell projection. It is found in the growth cone. Functionally, transcriptional regulator involved in developmental processes. Functions in association with APBB1, SET and HDAC factors as a transcriptional repressor, that inhibits the expression of CASP4. TSHZ3-mediated transcription repression involves the recruitment of histone deacetylases HDAC1 and HDAC2. Associates with chromatin in a region surrounding the CASP4 transcriptional start site(s). Regulates the development of neurons involved in both respiratory rhythm and airflow control. Promotes maintenance of nucleus ambiguus (nA) motoneurons, which govern upper airway function, and establishes a respiratory rhythm generator (RRG) activity compatible with survival at birth. Involved in the differentiation of the proximal uretic smooth muscle cells during developmental processes. Involved in the up-regulation of myocardin, that directs the expression of smooth muscle cells in the proximal ureter. Involved in the modulation of glutamatergic synaptic transmission and long-term synaptic potentiation. This is Teashirt homolog 3 (Tshz3) from Mus musculus (Mouse).